A 449-amino-acid polypeptide reads, in one-letter code: 3-phosphoshikimate 1-carboxyvinyltransferase (449 aa).

A disordered region spans residues 1–23 (MSHSASPKPATARRSEALTGEIR). Positions 28, 29, and 33 each coordinate 3-phosphoshikimate. Position 28 (K28) interacts with phosphoenolpyruvate. G100 and R128 together coordinate phosphoenolpyruvate. Positions 173, 175, 326, and 353 each coordinate 3-phosphoshikimate. Q175 lines the phosphoenolpyruvate pocket. The active-site Proton acceptor is the D326. Residues R357 and R402 each contribute to the phosphoenolpyruvate site.

The protein belongs to the EPSP synthase family. As to quaternary structure, monomer.

The protein resides in the cytoplasm. It carries out the reaction 3-phosphoshikimate + phosphoenolpyruvate = 5-O-(1-carboxyvinyl)-3-phosphoshikimate + phosphate. It participates in metabolic intermediate biosynthesis; chorismate biosynthesis; chorismate from D-erythrose 4-phosphate and phosphoenolpyruvate: step 6/7. Catalyzes the transfer of the enolpyruvyl moiety of phosphoenolpyruvate (PEP) to the 5-hydroxyl of shikimate-3-phosphate (S3P) to produce enolpyruvyl shikimate-3-phosphate and inorganic phosphate. This chain is 3-phosphoshikimate 1-carboxyvinyltransferase, found in Pseudomonas sp. (strain PG2982).